We begin with the raw amino-acid sequence, 234 residues long: Probable porphobilinogen deaminase (234 aa).

This sequence belongs to the HMBS family.

It carries out the reaction 4 porphobilinogen + H2O = hydroxymethylbilane + 4 NH4(+). It participates in porphyrin-containing compound metabolism; protoporphyrin-IX biosynthesis; coproporphyrinogen-III from 5-aminolevulinate: step 2/4. Its function is as follows. Tetrapolymerization of the monopyrrole PBG into the hydroxymethylbilane pre-uroporphyrinogen in several discrete steps. In Chlamydia pneumoniae (Chlamydophila pneumoniae), this protein is Probable porphobilinogen deaminase (hemC).